We begin with the raw amino-acid sequence, 363 residues long: Heat-inducible transcription repressor HrcA (363 aa).

This sequence belongs to the HrcA family.

Functionally, negative regulator of class I heat shock genes (grpE-dnaK-dnaJ and groELS operons). Prevents heat-shock induction of these operons. This Afipia carboxidovorans (strain ATCC 49405 / DSM 1227 / KCTC 32145 / OM5) (Oligotropha carboxidovorans) protein is Heat-inducible transcription repressor HrcA.